Consider the following 485-residue polypeptide: Bifunctional protein GlmU (485 aa).

Residues 1–241 (MSASDFSSAV…ARELAGVNDR (241 aa)) form a pyrophosphorylase region. UDP-N-acetyl-alpha-D-glucosamine-binding positions include 13 to 16 (LAAG), Lys-27, Gln-84, and 89 to 90 (GT). Asp-114 provides a ligand contact to Mg(2+). Residues Gly-151, Glu-166, Asn-181, and Asn-239 each coordinate UDP-N-acetyl-alpha-D-glucosamine. Asn-239 serves as a coordination point for Mg(2+). The segment at 242 to 262 (VQLAEAGAELNRRTVIAAMRG) is linker. The N-acetyltransferase stretch occupies residues 263–485 (GATIVDPATT…AAQNVHNQEG (223 aa)). UDP-N-acetyl-alpha-D-glucosamine-binding residues include Arg-344 and Lys-362. Residue His-374 is the Proton acceptor of the active site. UDP-N-acetyl-alpha-D-glucosamine-binding residues include Tyr-377 and Asn-388. Acetyl-CoA contacts are provided by residues Ala-391, 397–398 (NY), Ser-416, and Ala-434. The tract at residues 465–485 (RPGTAAAQAAEAAQNVHNQEG) is disordered. The segment covering 469–478 (AAAQAAEAAQ) has biased composition (low complexity).

In the N-terminal section; belongs to the N-acetylglucosamine-1-phosphate uridyltransferase family. It in the C-terminal section; belongs to the transferase hexapeptide repeat family. As to quaternary structure, homotrimer. Mg(2+) is required as a cofactor.

The protein resides in the cytoplasm. It catalyses the reaction alpha-D-glucosamine 1-phosphate + acetyl-CoA = N-acetyl-alpha-D-glucosamine 1-phosphate + CoA + H(+). The enzyme catalyses N-acetyl-alpha-D-glucosamine 1-phosphate + UTP + H(+) = UDP-N-acetyl-alpha-D-glucosamine + diphosphate. It functions in the pathway nucleotide-sugar biosynthesis; UDP-N-acetyl-alpha-D-glucosamine biosynthesis; N-acetyl-alpha-D-glucosamine 1-phosphate from alpha-D-glucosamine 6-phosphate (route II): step 2/2. The protein operates within nucleotide-sugar biosynthesis; UDP-N-acetyl-alpha-D-glucosamine biosynthesis; UDP-N-acetyl-alpha-D-glucosamine from N-acetyl-alpha-D-glucosamine 1-phosphate: step 1/1. Its pathway is bacterial outer membrane biogenesis; LPS lipid A biosynthesis. Functionally, catalyzes the last two sequential reactions in the de novo biosynthetic pathway for UDP-N-acetylglucosamine (UDP-GlcNAc). The C-terminal domain catalyzes the transfer of acetyl group from acetyl coenzyme A to glucosamine-1-phosphate (GlcN-1-P) to produce N-acetylglucosamine-1-phosphate (GlcNAc-1-P), which is converted into UDP-GlcNAc by the transfer of uridine 5-monophosphate (from uridine 5-triphosphate), a reaction catalyzed by the N-terminal domain. This is Bifunctional protein GlmU from Corynebacterium glutamicum (strain ATCC 13032 / DSM 20300 / JCM 1318 / BCRC 11384 / CCUG 27702 / LMG 3730 / NBRC 12168 / NCIMB 10025 / NRRL B-2784 / 534).